The chain runs to 383 residues: Large ribosomal subunit protein uL3 (383 aa).

Belongs to the universal ribosomal protein uL3 family.

It is found in the cytoplasm. This Encephalitozoon cuniculi (strain GB-M1) (Microsporidian parasite) protein is Large ribosomal subunit protein uL3 (RPL3-1).